We begin with the raw amino-acid sequence, 443 residues long: UPF0597 protein DVU_0440 (443 aa).

This sequence belongs to the UPF0597 family.

This is UPF0597 protein DVU_0440 from Nitratidesulfovibrio vulgaris (strain ATCC 29579 / DSM 644 / CCUG 34227 / NCIMB 8303 / VKM B-1760 / Hildenborough) (Desulfovibrio vulgaris).